The following is a 192-amino-acid chain: uncharacterized protein (192 aa).

Residues 29 to 160 (QRQAAVLIPV…PLDVYRRGNS (132 aa)) form the Nudix hydrolase domain. Residues 67-89 (GAVDSTDASLIAAALREAQEEVA) carry the Nudix box motif. Residues E83 and E87 each contribute to the Mg(2+) site.

It belongs to the Nudix hydrolase family. PCD1 subfamily. Mn(2+) serves as cofactor. It depends on Mg(2+) as a cofactor.

In terms of biological role, probably mediates the hydrolysis of some nucleoside diphosphate derivatives. This is an uncharacterized protein from Salmonella agona (strain SL483).